A 153-amino-acid chain; its full sequence is uncharacterized protein (153 aa).

The signal sequence occupies residues 1–19 (MRKYIPLVLFIFSWPVLCA). Catalysis depends on residues Arg46, Glu54, and Arg88.

It belongs to the thermonuclease family.

This is an uncharacterized protein from Escherichia coli O157:H7.